A 78-amino-acid chain; its full sequence is Large ribosomal subunit protein bL28 (78 aa).

Positions 1–29 (MSAHCQVTGRKPSFGKSVSHSHRRTSRRW) are disordered.

It belongs to the bacterial ribosomal protein bL28 family.

This Corynebacterium glutamicum (strain ATCC 13032 / DSM 20300 / JCM 1318 / BCRC 11384 / CCUG 27702 / LMG 3730 / NBRC 12168 / NCIMB 10025 / NRRL B-2784 / 534) protein is Large ribosomal subunit protein bL28.